A 793-amino-acid polypeptide reads, in one-letter code: MIKDIYKTAETFHNDFYDFLKAVSTQPKKLMITGELINLYVASGYDKNSGLYEFIEKIQETISLDHSVILDVRIKIASIKFYRISLEEFLIEEISSKEFLIYKETVAKPDTLNTTLNLNFKPFYDKSPAVRDIKYIGSGVEYLNRFLSSQMFTNEERWKKNLFDFIRLHNFNGEQLILNDRIKDTKHLNNQINAALAKLGNHPANTPYENIKHILQELGFEKGLGKDAGTITHNLNLLDQLLNSPDHNALAEFISSIPMILNIAIISPHGFFGQEGVLGLPDTGGQVVYILDQVKALEKQLIDSLKKSGLNLLPKIIVLTRLIPNARGTTCNQRLEKIYGAKNSWILRVPFREYNKRVTDEWISRFEIWPYLEDFAEDSYTALLAEFKKRPDLIIGNYSDGNLVAYLLAKKFKVTQCGIAHALEKSKYLYSALYWYDLEKYYHFSMQFTADLLAINSADFLITSSFQEIAGTEKSIGQYESYMHFTMPGLYRVENGVNPFHVKFNIVSPGVNEKIYFPYPKTKWRLKETKRRIENLFFSNSEDPDVIGWLDNPEKTPIFTMSRLDRIKNISFLVRCFGESEELQQTSNLIVVAGKIDETMTDDYEEKEQIRLMHELITKYKLHNKIRWIGKLLPKDESGEAYRIIAERRGIFVQPALFEGFGLTVLEAMTSGLPVFATKYGGPLEIIQNGVNGFHIDPVNQEETTEKIVRFLSDSYIDSSVWDKLSKAAIKRVTEKYSWKLYSKRLLSLAKLYGFWKYATNLEHEDINAYLDLIYHTIYKSRAKILLEEHMKR.

The tract at residues 259–738 (MILNIAIISP…AIKRVTEKYS (480 aa)) is GT-B glycosyltransferase.

The protein belongs to the glycosyltransferase 1 family. Homotetramer.

The enzyme catalyses an NDP-alpha-D-glucose + D-fructose = a ribonucleoside 5'-diphosphate + sucrose + H(+). Catalyzes the reversible conversion of sucrose and a nucleotide disphosphate (NDP) into fructose and NDP-glucose; although the reaction is freely reversible in vitro, the physiological reaction seems to be sucrose cleavage. Unlike characterized plant enzymes prefers ADP as a cosubstrate, whereas plants prefer UDP. Its preference for ADP over UDP suggests it may directly link sucrose and glycogen metabolism. This is Sucrose synthase from Melioribacter roseus (strain JCM 17771 / P3M-2).